Reading from the N-terminus, the 556-residue chain is HIRA-interacting protein 3 (556 aa).

The residue at position 27 (S27) is a Phosphoserine. The segment covering 64–77 (DEAASREDKLDLTK) has biased composition (basic and acidic residues). Residues 64–426 (DEAASREDKL…GRRGEDHPAV (363 aa)) are disordered. Position 84 is a phosphothreonine (T84). A phosphoserine mark is found at S87, S98, S100, S125, S142, S143, S159, and S160. Low complexity predominate over residues 99-108 (ESESGSEASS). The span at 126-158 (PAKEENPRRASKAVEESSDEERQRDLPAQRGEE) shows a compositional bias: basic and acidic residues. Positions 168-177 (KGKTRKKPVV) are enriched in basic residues. S196, S199, S223, and S227 each carry phosphoserine. Over residues 209–224 (KKVEGNKGTKSLKESE) the composition is skewed to basic and acidic residues. The span at 240 to 254 (EEEVEEEEKEEDEEK) shows a compositional bias: acidic residues. The span at 260-269 (RTRSNGRRKS) shows a compositional bias: basic residues. 2 positions are modified to phosphoserine: S289 and S291. Over residues 304 to 322 (DSGRDREPPVQRKSEDRTQ) the composition is skewed to basic and acidic residues. Phosphoserine is present on residues S330, S332, S333, and S357. At T358 the chain carries Phosphothreonine. S359, S363, S370, and S372 each carry phosphoserine. Residues 385 to 396 (RSSKKSSRKGRT) show a composition bias toward basic residues. The tract at residues 403 to 527 (SDGSPEAKGG…APPGELYRRT (125 aa)) is interaction with the histone H2A-H2B complex. T471 is modified (phosphothreonine). A disordered region spans residues 502–556 (SGRPRRRTAWNPLGEAAPPGELYRRTLDSDEERPRPAPPDWSHMRGIISSDGESN). Over residues 523-536 (LYRRTLDSDEERPR) the composition is skewed to basic and acidic residues. S530, S550, S551, and S555 each carry phosphoserine.

Interacts (via C-terminus) with histone H2A-H2B dimers; the interaction is direct. Interacts with HIRA. Interacts with CK2. In terms of processing, phosphorylated by CK2. Widely expressed. Isoform 1 is predominant in skeletal muscle. Isoform 2 is predominant in liver and heart.

The protein localises to the nucleus. Histone chaperone that carries a H2A-H2B histone complex and facilitates its deposition onto chromatin. This Homo sapiens (Human) protein is HIRA-interacting protein 3 (HIRIP3).